Here is a 373-residue protein sequence, read N- to C-terminus: MGKWRAVAALLLRNQLLNSSKRLNLSSSPCVSKHPTIGLASRFLNFRHFSAFPSPISIYNNDSDSGSNDAYQNYEFGTEAEEALGKIPIKAYFLSTSIDLKAMQAENLCNVVPPTSRSTNYIALKFSDFTPSGIYSLDERESVSNCKFMVVFQYGSAILFNVDDNDVDRYLDIVRRHASGLLTEMRKDDYAVKEKPLLIEEMKGGPDYIVLKTLDTNSIRIIGSVLGQSIALDYSVSQVNKLVEEFADINRSMAKTGTFTMTRKKLFQLVGKANSNIADVILKVGLFERSEIAWREARYAQIYEYLREEYEISQRFGDLDYKLKFIEHNIHFLQEVMQNRQSDLLEWCIIFLLAIENAIGIYEIVRESAGASL.

The transit peptide at 1–49 directs the protein to the mitochondrion; the sequence is MGKWRAVAALLLRNQLLNSSKRLNLSSSPCVSKHPTIGLASRFLNFRHF. A helical membrane pass occupies residues 346-362; sequence EWCIIFLLAIENAIGIY.

This sequence belongs to the RMD1/sif2 family. As to expression, predominantly expressed in the root meristem, in the primary and lateral root tips. Also present in leaves and pollen.

It is found in the mitochondrion membrane. Its subcellular location is the mitochondrion. In terms of biological role, required for the maintenance of mitochondrial structure. Positive regulator of cell division and endoreduplication but negative regulator of cell expansion in the postembryonic root meristem, thus leading to the promotion of root growth. The protein is Protein RETARDED ROOT GROWTH, mitochondrial of Arabidopsis thaliana (Mouse-ear cress).